Consider the following 121-residue polypeptide: UPF0102 protein Xfasm12_1748 (121 aa).

Belongs to the UPF0102 family.

This is UPF0102 protein Xfasm12_1748 from Xylella fastidiosa (strain M12).